The chain runs to 336 residues: Fructose-1,6-bisphosphatase class 1 (336 aa).

Residues Glu-92, Asp-115, Leu-117, and Asp-118 each coordinate Mg(2+). Residues 118–121 (DGSS), Asn-211, Tyr-244, 262–264 (YLY), and Lys-274 contribute to the substrate site. Glu-280 provides a ligand contact to Mg(2+).

The protein belongs to the FBPase class 1 family. Homotetramer. The cofactor is Mg(2+).

The protein localises to the cytoplasm. The enzyme catalyses beta-D-fructose 1,6-bisphosphate + H2O = beta-D-fructose 6-phosphate + phosphate. The protein operates within carbohydrate biosynthesis; gluconeogenesis. This chain is Fructose-1,6-bisphosphatase class 1, found in Aliivibrio salmonicida (strain LFI1238) (Vibrio salmonicida (strain LFI1238)).